Here is a 238-residue protein sequence, read N- to C-terminus: Probable transcriptional regulatory protein VPA0011 (238 aa).

This sequence belongs to the TACO1 family.

It is found in the cytoplasm. In Vibrio parahaemolyticus serotype O3:K6 (strain RIMD 2210633), this protein is Probable transcriptional regulatory protein VPA0011.